We begin with the raw amino-acid sequence, 240 residues long: Uridylate kinase (240 aa).

Residue 12 to 15 coordinates ATP; the sequence is KLSG. An involved in allosteric activation by GTP region spans residues 20–25; sequence GSQGFG. UMP is bound at residue glycine 54. Glycine 55 and arginine 59 together coordinate ATP. Residues aspartate 74 and 135-142 contribute to the UMP site; that span reads TGNPYFST. ATP-binding residues include tyrosine 168 and aspartate 171.

It belongs to the UMP kinase family. Homohexamer.

It localises to the cytoplasm. The enzyme catalyses UMP + ATP = UDP + ADP. Its pathway is pyrimidine metabolism; CTP biosynthesis via de novo pathway; UDP from UMP (UMPK route): step 1/1. With respect to regulation, allosterically activated by GTP. Inhibited by UTP. Catalyzes the reversible phosphorylation of UMP to UDP. This Desulfitobacterium hafniense (strain Y51) protein is Uridylate kinase.